A 544-amino-acid chain; its full sequence is Bacillolysin (544 aa).

The N-terminal stretch at 1-25 (MNKRAMLGAIGLAFGLMAWPFGASA) is a signal peptide. The propeptide at 26-225 (KGKSMVWNEQ…DEAKPGGAQP (200 aa)) is activation peptide. Residues aspartate 285, aspartate 287, glutamine 289, and aspartate 366 each coordinate Ca(2+). Position 370 (histidine 370) interacts with Zn(2+). The active site involves glutamate 371. Zn(2+) contacts are provided by histidine 374 and glutamate 394. Residues glutamate 405, asparagine 411, aspartate 413, glutamate 415, glutamate 418, tyrosine 421, threonine 422, valine 425, and aspartate 428 each coordinate Ca(2+). The active-site Proton donor is the histidine 459.

This sequence belongs to the peptidase M4 family. Ca(2+) serves as cofactor. Requires Zn(2+) as cofactor.

Its subcellular location is the secreted. The catalysed reaction is Similar, but not identical, to that of thermolysin.. Extracellular zinc metalloprotease. In Bacillus caldolyticus, this protein is Bacillolysin (npr).